The sequence spans 235 residues: 7-carboxy-7-deazaguanine synthase (235 aa).

Residues 25–27 and Arg-40 contribute to the substrate site; that span reads IQG. The Radical SAM core domain occupies 31–235; the sequence is FTGTYSVFVR…PRLHLLVQLP (205 aa). Residues Cys-44, Cys-48, and Cys-51 each coordinate [4Fe-4S] cluster. A Mg(2+)-binding site is contributed by Thr-53. Thr-85 serves as a coordination point for substrate. Residues Gly-87 and 135–137 contribute to the S-adenosyl-L-methionine site; that span reads SPK. Pro-235 is a substrate binding site.

Belongs to the radical SAM superfamily. 7-carboxy-7-deazaguanine synthase family. Homodimer. [4Fe-4S] cluster serves as cofactor. It depends on S-adenosyl-L-methionine as a cofactor. Mg(2+) is required as a cofactor.

The enzyme catalyses 6-carboxy-5,6,7,8-tetrahydropterin + H(+) = 7-carboxy-7-deazaguanine + NH4(+). The protein operates within purine metabolism; 7-cyano-7-deazaguanine biosynthesis. Catalyzes the complex heterocyclic radical-mediated conversion of 6-carboxy-5,6,7,8-tetrahydropterin (CPH4) to 7-carboxy-7-deazaguanine (CDG), a step common to the biosynthetic pathways of all 7-deazapurine-containing compounds. This Hyperthermus butylicus (strain DSM 5456 / JCM 9403 / PLM1-5) protein is 7-carboxy-7-deazaguanine synthase.